The primary structure comprises 436 residues: Tol-Pal system protein TolB (436 aa).

Positions 1–19 (MVKCSLIRALMVVAGLVGA) are cleaved as a signal peptide.

Belongs to the TolB family. As to quaternary structure, the Tol-Pal system is composed of five core proteins: the inner membrane proteins TolA, TolQ and TolR, the periplasmic protein TolB and the outer membrane protein Pal. They form a network linking the inner and outer membranes and the peptidoglycan layer.

It localises to the periplasm. Part of the Tol-Pal system, which plays a role in outer membrane invagination during cell division and is important for maintaining outer membrane integrity. The polypeptide is Tol-Pal system protein TolB (Rhizobium etli (strain ATCC 51251 / DSM 11541 / JCM 21823 / NBRC 15573 / CFN 42)).